Consider the following 339-residue polypeptide: DNA-directed RNA polymerase subunit alpha (339 aa).

Residues 1 to 233 (MVREEVAGST…DLFLPFLHAE (233 aa)) are alpha N-terminal domain (alpha-NTD). The tract at residues 264–339 (KKGIPLNCIF…IDLLKNKLSF (76 aa)) is alpha C-terminal domain (alpha-CTD).

The protein belongs to the RNA polymerase alpha chain family. In terms of assembly, in plastids the minimal PEP RNA polymerase catalytic core is composed of four subunits: alpha, beta, beta', and beta''. When a (nuclear-encoded) sigma factor is associated with the core the holoenzyme is formed, which can initiate transcription.

Its subcellular location is the plastid. The protein resides in the chloroplast. The enzyme catalyses RNA(n) + a ribonucleoside 5'-triphosphate = RNA(n+1) + diphosphate. Its function is as follows. DNA-dependent RNA polymerase catalyzes the transcription of DNA into RNA using the four ribonucleoside triphosphates as substrates. In Eremopyrum distans, this protein is DNA-directed RNA polymerase subunit alpha.